The sequence spans 172 residues: Large ribosomal subunit protein uL10 (172 aa).

It belongs to the universal ribosomal protein uL10 family. Part of the ribosomal stalk of the 50S ribosomal subunit. The N-terminus interacts with L11 and the large rRNA to form the base of the stalk. The C-terminus forms an elongated spine to which L12 dimers bind in a sequential fashion forming a multimeric L10(L12)X complex.

Its function is as follows. Forms part of the ribosomal stalk, playing a central role in the interaction of the ribosome with GTP-bound translation factors. This Francisella philomiragia subsp. philomiragia (strain ATCC 25017 / CCUG 19701 / FSC 153 / O#319-036) protein is Large ribosomal subunit protein uL10.